A 177-amino-acid polypeptide reads, in one-letter code: Probasin (177 aa).

The first 17 residues, 1 to 17 (MRVILLLLTLDVLGVSS), serve as a signal peptide directing secretion. A disulfide bond links cysteine 79 and cysteine 170.

Belongs to the calycin superfamily. Lipocalin family. Prostatic epithelial cells.

It is found in the nucleus. The protein resides in the secreted. The sequence is that of Probasin (Pbsn) from Rattus norvegicus (Rat).